The sequence spans 653 residues: Rab11 family-interacting protein 5 (653 aa).

One can recognise a C2 domain in the interval 5-146 (RGAEPAAGPS…AGRAQHTQWY (142 aa)). A phosphoserine mark is found at Ser176, Ser283, Ser286, Ser307, Ser357, and Ser367. Positions 269 to 300 (GPGAELLTRSPSRSSWLSTEGGRDSAQSPKLF) are disordered. A compositionally biased stretch (polar residues) spans 277–286 (RSPSRSSWLS). 2 disordered regions span residues 342–402 (HIYN…AVLG) and 415–548 (PGAS…RSSL). Residues 357 to 368 (SISGSLPSSGSL) are compositionally biased toward low complexity. Positions 375-387 (FSEEGPRSTDDTW) are enriched in basic and acidic residues. Residues Ser391 and Ser395 each carry the phosphoserine modification. Basic and acidic residues-rich tracts occupy residues 420-430 (PGEEEGARLPE) and 447-460 (VAEK…ERKP). Ser494, Ser538, Ser547, and Ser553 each carry phosphoserine. An FIP-RBD domain is found at 586 to 648 (KDSAVLDQSA…ETSPTLLQIP (63 aa)).

Interacts with RAB11FIP4. Interacts with NAPG. Interacts with RO60. Interacts with RAB11A that has been activated by GTP binding. In terms of assembly, (Microbial infection) Interacts with Kaposi's sarcoma-associated herpesvirus/HHV-8 protein ORF45; this interaction results in the lysosomal degradation of ORF45 and the inhibition of viral particle release. Post-translationally, phosphorylated on serine and threonine residues. Phosphorylation at Ser-357 is PKA-dependent. Detected at low levels in heart, brain, placenta, lung, liver, adipocytes, kidney, spleen, skeletal muscle and pancreas.

It localises to the cytoplasm. The protein localises to the recycling endosome membrane. The protein resides in the early endosome membrane. Its subcellular location is the golgi apparatus membrane. It is found in the cytoplasmic vesicle. It localises to the secretory vesicle membrane. The protein localises to the mitochondrion membrane. Its function is as follows. Rab effector involved in protein trafficking from apical recycling endosomes to the apical plasma membrane. Involved in insulin granule exocytosis. May regulate V-ATPase intracellular transport in response to extracellular acidosis. The polypeptide is Rab11 family-interacting protein 5 (Homo sapiens (Human)).